The sequence spans 1740 residues: SH3 and multiple ankyrin repeat domains protein 3 (1740 aa).

Residues 1-75 form an intramolecular interaction with the ANK repeats region; that stretch reads MDGPGASAVV…KFLDEERLLQ (75 aa). Residue Y122 is modified to Phosphotyrosine. 6 ANK repeats span residues 148 to 181, 182 to 214, 215 to 245, 249 to 278, 282 to 311, and 315 to 345; these read SGEC…FRTR, DGLT…YKDS, RGLT…QLGT, NGWQ…NMGA, SGNT…NKDV, and NSQT…DVVP. A disordered region spans residues 354-466; that stretch reads KRRRLAGPSG…PPPRGPKRKL (113 aa). A phosphoserine mark is found at S373, S375, S387, and S394. The segment covering 404–415 has biased composition (basic and acidic residues); sequence LQEEKDRDRDGE. Pro residues predominate over residues 444 to 460; the sequence is APGPGPASPAPPAPPPR. The 60-residue stretch at 470 to 529 folds into the SH3 domain; the sequence is VPGRKFIAVKAHSPQGEGEIPLHRGEAVKVLSIGEGGFWEGTVKGRTGWFPADCVEEVQM. At S482 the chain carries Phosphoserine. Residue Y555 is modified to Phosphotyrosine. The PDZ domain occupies 570–664; it reads VAILQKRDHE…RLVMKVVSVT (95 aa). The disordered stretch occupies residues 664–687; the sequence is TRKPEEDSARRRAPPPPKRAPSTT. The required for interaction with ABI1 stretch occupies residues 677–684; it reads PPPPKRAP. Phosphoserine occurs at positions 694, 781, 790, and 801. 5 disordered regions span residues 759–855, 868–1053, 1115–1199, 1211–1463, and 1476–1518; these read RQGL…RSSF, AGLY…QPSR, AARE…MILS, LIVV…GPAR, and GDPV…EPVG. Positions 812–845 are enriched in pro residues; sequence IPPPPQTAPPPPPAPYYFDSGPPPTFSPPPPPPG. S891 and S898 each carry phosphoserine. Residue T913 is modified to Phosphothreonine. Y931 is subject to Phosphotyrosine. Residue R966 is modified to Asymmetric dimethylarginine. Over residues 1017–1027 the composition is skewed to basic and acidic residues; sequence VKERRLEERRR. Residues 1123 to 1132 show a composition bias toward polar residues; that stretch reads SQTPSRSPTP. Position 1131 is a phosphothreonine (T1131). Residues S1135, S1160, S1164, and S1167 each carry the phosphoserine modification. The span at 1175-1195 shows a compositional bias: basic and acidic residues; sequence ARREAEKPTREERKSPEDKKS. At T1235 the chain carries Phosphothreonine. Pro residues-rich tracts occupy residues 1252–1262 and 1322–1334; these read MPSPRAQPPGS and TPPP…PTTV. Residue S1254 is modified to Phosphoserine. Residues 1335–1344 are compositionally biased toward low complexity; sequence PSPASGKPSS. A compositionally biased stretch (basic and acidic residues) spans 1361 to 1371; the sequence is ADTRSSSDPHL. The segment covering 1372 to 1393 has biased composition (low complexity); the sequence is ETTSTISTVSSMSTLSSESGEL. Positions 1411 to 1417 match the SH3-binding motif; that stretch reads PPVPPKP. The residue at position 1421 (S1421) is a Phosphoserine. Positions 1495-1515 form a coiled coil; sequence ISELSSRLQQLNKDTRSLGEE. Positions 1496–1506 are enriched in polar residues; the sequence is SELSSRLQQLN. Residues S1511, S1522, S1530, and S1549 each carry the phosphoserine modification. 2 disordered regions span residues 1556–1594 and 1637–1673; these read ISAQ…PASL and VRSV…QQKP. Positions 1637–1647 are enriched in low complexity; it reads VRSVSARSRSP. Phosphoserine is present on residues S1644, S1646, and S1648. Pro residues predominate over residues 1648–1658; sequence SPSPLPSPSPG. The segment covering 1659 to 1668 has biased composition (low complexity); sequence SGPSAGPRRP. In terms of domain architecture, SAM spans 1677–1740; sequence WSKFDVGDWL…ERALRQLDGS (64 aa).

Belongs to the SHANK family. In terms of assembly, may homomultimerize via its SAM domain. Interacts with BAIAP2, DBNL and SLC17A7/VGLUT1. Interacts with DLGAP1/GKAP, GRM1/MGLUR1, GRM5/MGLUR5 and LZTS3 C-termini via its PDZ domain. Interacts with ABI1, HOMER1, HOMER2, HOMER3 and CTTN/cortactin SH3 domain. Is part of a complex with DLG4/PSD-95 and DLGAP1/GKAP. Interacts (via PDZ domain) with the GRIA1 subunit of the AMPA receptor (via PDZ-binding motif). Interacts with WASF1 and CYFIP2; the interactions mediate the association of SHANK3 with the WAVE1 complex. Interacts with ARPC2; the interaction probably mediates the association of SHANK3 with the Arp2/3 complex. Interacts (via ANK repeats) with SHARPIN and SPTAN1. Interacts (via PDZ domain) with ARHGAP44 (probably via PDZ-binding motif); the interaction takes place in dendritic spines and promotes GRIA1 exocytosis. Interacts with CAMK2A. Interacts with DIP2A. Interacts with ADGRL3. In terms of tissue distribution, widely expressed in brain (at protein level).

It is found in the cytoplasm. It localises to the postsynaptic density. Its subcellular location is the cell projection. The protein resides in the dendritic spine. Its function is as follows. Major scaffold postsynaptic density protein which interacts with multiple proteins and complexes to orchestrate the dendritic spine and synapse formation, maturation and maintenance. Interconnects receptors of the postsynaptic membrane including NMDA-type and metabotropic glutamate receptors via complexes with GKAP/PSD-95 and HOMER, respectively, and the actin-based cytoskeleton. Plays a role in the structural and functional organization of the dendritic spine and synaptic junction through the interaction with Arp2/3 and WAVE1 complex as well as the promotion of the F-actin clusters. By way of this control of actin dynamics, participates in the regulation of developing neurons growth cone motility and the NMDA receptor-signaling. Also modulates GRIA1 exocytosis and GRM5/MGLUR5 expression and signaling to control the AMPA and metabotropic glutamate receptor-mediated synaptic transmission and plasticity. May be required at an early stage of synapse formation and be inhibited by IGF1 to promote synapse maturation. The protein is SH3 and multiple ankyrin repeat domains protein 3 (Shank3) of Rattus norvegicus (Rat).